A 103-amino-acid polypeptide reads, in one-letter code: Small ribosomal subunit protein uS10 (103 aa).

Belongs to the universal ribosomal protein uS10 family. As to quaternary structure, part of the 30S ribosomal subunit.

Functionally, involved in the binding of tRNA to the ribosomes. This chain is Small ribosomal subunit protein uS10, found in Psychrobacter arcticus (strain DSM 17307 / VKM B-2377 / 273-4).